The primary structure comprises 342 residues: S-adenosylmethionine:tRNA ribosyltransferase-isomerase (342 aa).

The protein belongs to the QueA family. Monomer.

It localises to the cytoplasm. It carries out the reaction 7-aminomethyl-7-carbaguanosine(34) in tRNA + S-adenosyl-L-methionine = epoxyqueuosine(34) in tRNA + adenine + L-methionine + 2 H(+). Its pathway is tRNA modification; tRNA-queuosine biosynthesis. Transfers and isomerizes the ribose moiety from AdoMet to the 7-aminomethyl group of 7-deazaguanine (preQ1-tRNA) to give epoxyqueuosine (oQ-tRNA). This Shouchella clausii (strain KSM-K16) (Alkalihalobacillus clausii) protein is S-adenosylmethionine:tRNA ribosyltransferase-isomerase.